Here is a 445-residue protein sequence, read N- to C-terminus: MSYFGTDGIRGKFGQMPITPEFALKLGFAAGKVLKRTSPKNKPLVVLGKDTRLSGYILESALQAGLNAAGVYVHLLGPLPTPAIAHLTRALHAHAGIVISASHNPYFDNGIKFFSSEGKKLPDSLQEEINKELEKDLFIEDTANLGKSVRVTDANGRYIEFCKSTFPYHFDLNNLKIVVDCAHGAAYSVGPSVFRELGAKVVALYNEPDGLNINENCGSTHPESLQKAVVEHGADLGIAFDGDADRVVMVDKFGNLIDGDHILYILATQAKNKPAGVVGTVMSNMALEVALEKANVGFVRAKVGDRYVLQALEENGWVTGGEPSGHILTLDKSTTGDAIIAALQVLTVMVEQNKALHELVNGFKLYPQVLVNVRLEQMLDPYSIPALVAEFNKAEEQLKGRGRILIRKSGTEPVIRVMVEGDNEQEVKTLAEHLANAVRSQAQVA.

Serine 102 serves as the catalytic Phosphoserine intermediate. 4 residues coordinate Mg(2+): serine 102, aspartate 241, aspartate 243, and aspartate 245. At serine 102 the chain carries Phosphoserine.

It belongs to the phosphohexose mutase family. Mg(2+) is required as a cofactor. Activated by phosphorylation.

The catalysed reaction is alpha-D-glucosamine 1-phosphate = D-glucosamine 6-phosphate. Catalyzes the conversion of glucosamine-6-phosphate to glucosamine-1-phosphate. This is Phosphoglucosamine mutase from Acinetobacter baumannii (strain AB0057).